The sequence spans 217 residues: uncharacterized protein (217 aa).

Positions 1 to 24 (MRYTVLIALQGALLLLLLIDDGQG) are cleaved as a signal peptide.

This is an uncharacterized protein from Aedes vexans (Inland floodwater mosquito).